A 210-amino-acid chain; its full sequence is Large ribosomal subunit protein uL3 (210 aa).

The disordered stretch occupies residues 125–151 (RHGQSRGPMSHGSRYHRRPGSMGPVAP).

The protein belongs to the universal ribosomal protein uL3 family. Part of the 50S ribosomal subunit. Forms a cluster with proteins L14 and L19.

One of the primary rRNA binding proteins, it binds directly near the 3'-end of the 23S rRNA, where it nucleates assembly of the 50S subunit. In Bacillus mycoides (strain KBAB4) (Bacillus weihenstephanensis), this protein is Large ribosomal subunit protein uL3.